The sequence spans 331 residues: 6-phosphogluconolactonase (331 aa).

K287 is subject to N6-acetyllysine.

This sequence belongs to the cycloisomerase 2 family.

The catalysed reaction is 6-phospho-D-glucono-1,5-lactone + H2O = 6-phospho-D-gluconate + H(+). It functions in the pathway carbohydrate degradation; pentose phosphate pathway; D-ribulose 5-phosphate from D-glucose 6-phosphate (oxidative stage): step 2/3. In terms of biological role, catalyzes the hydrolysis of 6-phosphogluconolactone to 6-phosphogluconate. The protein is 6-phosphogluconolactonase of Shigella sonnei (strain Ss046).